The chain runs to 691 residues: Hormonally up-regulated neu tumor-associated kinase homolog A (691 aa).

Residues 55-313 enclose the Protein kinase domain; that stretch reads YLIGRKLGEG…IQQALANRWL (259 aa). Residues 61–69 and Lys-84 each bind ATP; that span reads LGEGSFAKV. Asp-179 acts as the Proton acceptor in catalysis. The segment covering 406 to 425 has biased composition (basic and acidic residues); it reads MNKNSYEERRSKDLEKRGEP. Disordered regions lie at residues 406–475, 499–518, 580–640, and 655–679; these read MNKN…GGLS, QSPD…HSQE, FQFD…SRGR, and QVVS…SPGY. Over residues 440–453 the composition is skewed to polar residues; sequence SHRQNACLTPQGHS. Residues 457–470 are compositionally biased toward basic and acidic residues; it reads PVKERRSSKSERES. Residues 582–597 are compositionally biased toward polar residues; the sequence is FDNTSPSKSHFNQASF. Residues 604 to 620 show a composition bias toward low complexity; it reads SPSSPESMSPTSPHSPS. The span at 621-631 shows a compositional bias: polar residues; that stretch reads CNNNISGNLGS.

Belongs to the protein kinase superfamily. CAMK Ser/Thr protein kinase family. SNF1 subfamily.

The enzyme catalyses L-seryl-[protein] + ATP = O-phospho-L-seryl-[protein] + ADP + H(+). The catalysed reaction is L-threonyl-[protein] + ATP = O-phospho-L-threonyl-[protein] + ADP + H(+). This Xenopus laevis (African clawed frog) protein is Hormonally up-regulated neu tumor-associated kinase homolog A (hunk-a).